A 243-amino-acid chain; its full sequence is UPF0758 protein sll0766 (243 aa).

In terms of domain architecture, MPN spans 113 to 235 (VVDSPEAAAI…HQSLRQCTDL (123 aa)). 3 residues coordinate Zn(2+): histidine 184, histidine 186, and aspartate 197. A JAMM motif motif is present at residues 184-197 (HNHPSGGLEPSPED).

The protein belongs to the UPF0758 family.

In Synechocystis sp. (strain ATCC 27184 / PCC 6803 / Kazusa), this protein is UPF0758 protein sll0766.